The sequence spans 471 residues: SVGFKAGVKEYKLTYYTPEYETKDTDILAAFRVTPQPGVPPEEAGAAVAAESSTGTWTTVWTDGLTSLDRYKGRCYHIEPVAGEEDQYIAYVAYPLDLFEEGSVTNMFTSIVGNVFGFKALRALRLEDLRIPVAYIKTFQGPPHAIQVERDKLNKYGRPLLGCTIKPKLGLSAKNYGRAVYECLRGGLDFTKDDENVNSQPFMRWRDRFLFCAEAXYKAQAETGEIKGHYLNATAGTCEEMIKRAVFARELGVPIVMHDYLTGGFTANTSLAHYCRDNGLLLHIHRAMHAVIDRQKNHGMHFRVLXKALRMSGGDHIHAGTVVGKLEGERDITLGFVDLLRDDFIEKDRSRGIYFTQDWVSLPGVIPVASGGIHVWHMPALTEIFGDDAVLQFGGGTLGHPWGNAPGAVANRVALEACVKARNEGRDLAAEGNDIIREASKWSPELAAACEVWKEIRFNFQAVDTLDPLKS.

An N6,N6,N6-trimethyllysine modification is found at lysine 5. The substrate site is built by asparagine 114 and threonine 164. Lysine 166 acts as the Proton acceptor in catalysis. Lysine 168 serves as a coordination point for substrate. Mg(2+) contacts are provided by lysine 192, aspartate 194, and glutamate 195. Lysine 192 is modified (N6-carboxylysine). The Proton acceptor role is filled by histidine 285. Residues arginine 286, histidine 318, and serine 370 each coordinate substrate.

Belongs to the RuBisCO large chain family. Type I subfamily. As to quaternary structure, heterohexadecamer of 8 large chains and 8 small chains; disulfide-linked. The disulfide link is formed within the large subunit homodimers. Requires Mg(2+) as cofactor. Post-translationally, the disulfide bond which can form in the large chain dimeric partners within the hexadecamer appears to be associated with oxidative stress and protein turnover.

It localises to the plastid. It is found in the chloroplast. The catalysed reaction is 2 (2R)-3-phosphoglycerate + 2 H(+) = D-ribulose 1,5-bisphosphate + CO2 + H2O. It catalyses the reaction D-ribulose 1,5-bisphosphate + O2 = 2-phosphoglycolate + (2R)-3-phosphoglycerate + 2 H(+). Its function is as follows. RuBisCO catalyzes two reactions: the carboxylation of D-ribulose 1,5-bisphosphate, the primary event in carbon dioxide fixation, as well as the oxidative fragmentation of the pentose substrate in the photorespiration process. Both reactions occur simultaneously and in competition at the same active site. This chain is Ribulose bisphosphate carboxylase large chain, found in Strychnos nux-vomica (Poison nut).